The chain runs to 207 residues: Ribonuclease HII (207 aa).

One can recognise an RNase H type-2 domain in the interval 12–201; it reads DLVAGVDEVG…VRAAWEAREG (190 aa). 3 residues coordinate a divalent metal cation: D18, E19, and D110.

Belongs to the RNase HII family. The cofactor is Mn(2+). Requires Mg(2+) as cofactor.

The protein resides in the cytoplasm. The catalysed reaction is Endonucleolytic cleavage to 5'-phosphomonoester.. Functionally, endonuclease that specifically degrades the RNA of RNA-DNA hybrids. The polypeptide is Ribonuclease HII (Pseudomonas putida (strain W619)).